The sequence spans 136 residues: uncharacterized protein (136 aa).

A signal peptide spans 1–19 (MKKLLMVILGIALIGMAYA).

This is an uncharacterized protein from Methanocaldococcus jannaschii (strain ATCC 43067 / DSM 2661 / JAL-1 / JCM 10045 / NBRC 100440) (Methanococcus jannaschii).